The primary structure comprises 197 residues: MTLRAGVLAVQGDVSEHGDAIERAAAAHDRTAEVVEIREAGLVPDCDVLLLPGGESTTISRLIHREGIAEEIESHVEAGKPVLATCAGLIVSATDAQDDRVDTLNVIDVSVERNAFGRQRDSFEAPLDVTGLNESFPAVFIRAPVIDYVGEDVEVLATWDDRPVAVRDGPVVGTSFHPELTEDPRIHDLAFFDSVES.

54-56 (GES) serves as a coordination point for L-glutamine. Cysteine 86 functions as the Nucleophile in the catalytic mechanism. L-glutamine is bound by residues arginine 113 and 141–142 (IR). Residues histidine 177 and glutamate 179 each act as charge relay system in the active site.

This sequence belongs to the glutaminase PdxT/SNO family. In terms of assembly, in the presence of PdxS, forms a dodecamer of heterodimers. Only shows activity in the heterodimer.

The enzyme catalyses aldehydo-D-ribose 5-phosphate + D-glyceraldehyde 3-phosphate + L-glutamine = pyridoxal 5'-phosphate + L-glutamate + phosphate + 3 H2O + H(+). It catalyses the reaction L-glutamine + H2O = L-glutamate + NH4(+). It participates in cofactor biosynthesis; pyridoxal 5'-phosphate biosynthesis. Catalyzes the hydrolysis of glutamine to glutamate and ammonia as part of the biosynthesis of pyridoxal 5'-phosphate. The resulting ammonia molecule is channeled to the active site of PdxS. This chain is Pyridoxal 5'-phosphate synthase subunit PdxT, found in Haloarcula marismortui (strain ATCC 43049 / DSM 3752 / JCM 8966 / VKM B-1809) (Halobacterium marismortui).